The primary structure comprises 731 residues: E3 ubiquitin-protein ligase SMURF1 (731 aa).

Residues 1-120 (MSNVVTRRGG…TGYQRLDLCK (120 aa)) form the C2 domain. Residues 210 to 235 (RVRGPEVREHVQTPQNRSHGFQSQDL) form a disordered region. The span at 221-234 (QTPQNRSHGFQSQD) shows a compositional bias: polar residues. WW domains lie at 233–266 (QDLPEGYEQRTTVQGQVYFLHTQTGVSTWHDPRI) and 279–312 (GSLPAGWEVRTTVSGRIYFVDHNNRTTQFTDPRL). One can recognise an HECT domain in the interval 394–731 (RPKDLKKRLM…VEETSGFAVE (338 aa)). Cys699 (glycyl thioester intermediate) is an active-site residue.

The protein localises to the cytoplasm. It localises to the cell membrane. The enzyme catalyses S-ubiquitinyl-[E2 ubiquitin-conjugating enzyme]-L-cysteine + [acceptor protein]-L-lysine = [E2 ubiquitin-conjugating enzyme]-L-cysteine + N(6)-ubiquitinyl-[acceptor protein]-L-lysine.. Its pathway is protein modification; protein ubiquitination. E3 ubiquitin-protein ligase that acts as a negative regulator of BMP signaling pathway. Mediates ubiquitination and degradation of smad1 and smad5, 2 receptor-regulated SMADs specific for the BMP pathway. Promotes ubiquitination and subsequent proteasomal degradation of TRAF family members and rhoa. May play a role in dendrite formation by melanocytes. This Xenopus laevis (African clawed frog) protein is E3 ubiquitin-protein ligase SMURF1 (smurf1).